The sequence spans 346 residues: N-acetyl-gamma-glutamyl-phosphate reductase (346 aa).

Cysteine 149 is a catalytic residue.

It belongs to the NAGSA dehydrogenase family. Type 1 subfamily.

It localises to the cytoplasm. It carries out the reaction N-acetyl-L-glutamate 5-semialdehyde + phosphate + NADP(+) = N-acetyl-L-glutamyl 5-phosphate + NADPH + H(+). It participates in amino-acid biosynthesis; L-arginine biosynthesis; N(2)-acetyl-L-ornithine from L-glutamate: step 3/4. Its function is as follows. Catalyzes the NADPH-dependent reduction of N-acetyl-5-glutamyl phosphate to yield N-acetyl-L-glutamate 5-semialdehyde. This is N-acetyl-gamma-glutamyl-phosphate reductase from Saccharophagus degradans (strain 2-40 / ATCC 43961 / DSM 17024).